The primary structure comprises 186 residues: uncharacterized protein (186 aa).

The first 18 residues, 1-18, serve as a signal peptide directing secretion; sequence MNKFLFAAALIVSGLLVG. C19 carries N-palmitoyl cysteine lipidation. C19 carries S-diacylglycerol cysteine lipidation.

It localises to the cell membrane. This is an uncharacterized protein from Escherichia coli (strain K12).